A 297-amino-acid chain; its full sequence is Homoserine kinase (297 aa).

82-92 serves as a coordination point for ATP; it reads PLTRGLGSSAS.

The protein belongs to the GHMP kinase family. Homoserine kinase subfamily.

It is found in the cytoplasm. It carries out the reaction L-homoserine + ATP = O-phospho-L-homoserine + ADP + H(+). It participates in amino-acid biosynthesis; L-threonine biosynthesis; L-threonine from L-aspartate: step 4/5. Catalyzes the ATP-dependent phosphorylation of L-homoserine to L-homoserine phosphate. In Bacillus mycoides (strain KBAB4) (Bacillus weihenstephanensis), this protein is Homoserine kinase.